The chain runs to 217 residues: Putative oxidative stress regulator AosR (217 aa).

The CXXXC signature appears at 5-9 (CGRRC). The cysteines at positions 5 and 9 are disulfide-linked.

The protein belongs to the AosR family.

The polypeptide is Putative oxidative stress regulator AosR (Mycobacterium leprae (strain TN)).